The following is a 316-amino-acid chain: Olfactory receptor 10H3 (316 aa).

The Extracellular portion of the chain corresponds to 1–25 (MPGQNYRTISEFILSGFSAFPQQLL). Residues 26 to 46 (PVLFLLYLLMFLFTLLGNLLI) traverse the membrane as a helical segment. The Cytoplasmic segment spans residues 47-54 (MATVWIER). A helical transmembrane segment spans residues 55 to 75 (RLHTPMYLFLCALSISEILFT). The Extracellular portion of the chain corresponds to 76–99 (VAITPRMLADLLFTHRSITFVACA). Cysteines 98 and 190 form a disulfide. Residues 100-120 (IQMFFSFMFGFTHSFLLMVMG) form a helical membrane-spanning segment. Topologically, residues 121–139 (YDHYVTICHPLHYNMLMSP) are cytoplasmic. Residues 140 to 160 (RGCAHLVAWTWAGGSVMGMMV) form a helical membrane-spanning segment. The Extracellular portion of the chain corresponds to 161–197 (TMMVFHLTFCGSNVIHHFLCHVLSLLKLACGSKTSSV). Residues 198 to 218 (IMGVMLVCVTALIGCLFLIIL) traverse the membrane as a helical segment. The Cytoplasmic portion of the chain corresponds to 219 to 238 (SFVFIVAAILRIPSAEGRHK). A helical membrane pass occupies residues 239–259 (TFSTCVSHLTVVVMHYSFASL). Topologically, residues 260–272 (IYLKPKGLHSMYS) are extracellular. Residues 273 to 293 (DALMATTYTVFTPFLSPIIFS) form a helical membrane-spanning segment. At 294–316 (LRNKELKNAINKNFCRRFCPLSS) the chain is on the cytoplasmic side.

This sequence belongs to the G-protein coupled receptor 1 family.

It is found in the cell membrane. Odorant receptor. This Homo sapiens (Human) protein is Olfactory receptor 10H3 (OR10H3).